Consider the following 482-residue polypeptide: Cardiolipin synthase (482 aa).

The next 2 membrane-spanning stretches (helical) occupy residues L4–F24 and W34–F54. PLD phosphodiesterase domains are found at residues L217 to Y244 and D395 to S422. Catalysis depends on residues H222, K224, D229, H400, K402, and D407.

It belongs to the phospholipase D family. Cardiolipin synthase subfamily.

Its subcellular location is the cell membrane. The catalysed reaction is 2 a 1,2-diacyl-sn-glycero-3-phospho-(1'-sn-glycerol) = a cardiolipin + glycerol. Catalyzes the reversible phosphatidyl group transfer from one phosphatidylglycerol molecule to another to form cardiolipin (CL) (diphosphatidylglycerol) and glycerol. This Listeria innocua serovar 6a (strain ATCC BAA-680 / CLIP 11262) protein is Cardiolipin synthase (cls).